The primary structure comprises 49 residues: Cytochrome b559 subunit beta (49 aa).

The chain crosses the membrane as a helical span at residues 24–40 (WLAVHVLGVPTVFFLGA). Position 28 (H28) interacts with heme.

The protein belongs to the PsbE/PsbF family. In terms of assembly, heterodimer of an alpha subunit and a beta subunit. PSII is composed of 1 copy each of membrane proteins PsbA, PsbB, PsbC, PsbD, PsbE, PsbF, PsbH, PsbI, PsbJ, PsbK, PsbL, PsbM, PsbT, PsbX, PsbY, Psb30/Ycf12, peripheral proteins PsbO, CyanoQ (PsbQ), PsbU, PsbV and a large number of cofactors. It forms dimeric complexes. Requires heme b as cofactor.

The protein localises to the cellular thylakoid membrane. Its function is as follows. This b-type cytochrome is tightly associated with the reaction center of photosystem II (PSII). PSII is a light-driven water:plastoquinone oxidoreductase that uses light energy to abstract electrons from H(2)O, generating O(2) and a proton gradient subsequently used for ATP formation. It consists of a core antenna complex that captures photons, and an electron transfer chain that converts photonic excitation into a charge separation. This Prochlorococcus marinus (strain MIT 9303) protein is Cytochrome b559 subunit beta.